Here is a 336-residue protein sequence, read N- to C-terminus: MSKAFNNLAFDIMTAVSFDTDFNTMEKPEYRFALKAIEDSNVRLGVLLQAPELSVRSLDKKLFPTAYVAKYKFVKFIRMVMAKRLAASKATSKDIFSFLQDCKDPDSGKELSIAELSTETATFIVAGADTSSTSMAAVSHYITGSSNCYRRVAEEVRSTFCSVDEICLGPKLNSCAFLRACIDEALRLSPPGGSALWREVEQGGTLIDGTYVPGHCEVAVGIYSIHHSAAYYTKPFTYDPERWYRPLDAKGSRSEAPRSPYMPFSVGPRSCVGKPLAIAQMMIVFARLLWEYDMRRADYKSDWAEGDYSSTEYALKDHLTAWKEGPVLRFSPRLKP.

Cys-271 provides a ligand contact to heme.

This sequence belongs to the cytochrome P450 family. The cofactor is heme.

It functions in the pathway secondary metabolite biosynthesis. In terms of biological role, cytochrome P450 monooxygenase; part of the gene cluster that mediates the biosynthesis of the lipopeptide antibiotics leucinostatins that show extensive biological activities, including antimalarial, antiviral, antibacterial, antifungal, and antitumor activities, as well as phytotoxic. Leucinostatin A contains nine amino acid residues, including the unusual amino acid 4-methyl-L-proline (MePro), 2-amino-6-hydroxy-4-methyl-8-oxodecanoic acid (AHyMeOA), 3-hydroxyleucine (HyLeu), alpha-aminoisobutyric acid (AIB), beta-Ala, a 4-methylhex-2-enoic acid at the N-terminus as well as a N1,N1-dimethylpropane-1,2-diamine (DPD) at the C-terminus. The biosynthesis of leucinostatins is probably initiated with the assembly of 4-methylhex-2-enoic acid by a reducing PKS. Two reducing polyketide synthases, lcsB and lcsC, have been identified in the cluster and it is not clear which is the one that assembles 4-methylhex-2-enoic acid since both contain KS, AT, DH, cMT, ER, KR and ACP domains. The polyketide residue might be transferred to the NRPS lcsA, mediated by two additional enzymes, the acyl-CoA ligase lcsD and the thioesterase lcsE. The linear polyketide carboxylic acid, which is released from PKS, is converted to a CoA thioester by lcsD, and then lcsE hydrolyzes the thiol bond and shuttles the polyketide intermediate to lcsA. The C domain of the first module catalyzed the condensation of 4-methylhex-2-enoic acid and MePro carried by domain A1, followed by successive condensations of nine amino acids to trigger the elongation of the linear peptide. A5 and A6 domains of lcsA are proposed to incorporate leucine, A2 AHyMeOA, and A3 incorporates HyLeu. A4, A7 and A8 incorporate AIB. The AHyMeOA in leucinostatin A activated by the A2 might be produced by the second PKS (lcsB or lcsC) present within the cluster. The MePro is probably produced via leucine cyclization and may originate from a separate pathway, independent of the cluster. Another nonproteinogenic amino acid, beta-Ala, could be produced by an aspartic acid decarboxylase also localized outside of the cluster. Two candidates are VFPBJ_01400 and VFPBJ_10476. The final peptide scaffold may be released by the NAD(P)H-dependent thioester reductase (TE) at the C-terminal region of lcsA. Transamination of the lcsA product by the transaminase lcsP may produce DPD at the C-terminus. Further hydroxylation steps performed alternatively by the cytochrome P450 monooxygenases lcsI, lcsK and lcsN then yield the non-methylated leucinostatins precursor. It is also possible that leucines can be hydroxylated prior to their incorporation into the peptide. Varying extents of methylation then lead to the formation of leucinostatins A and B. The chain is Cytochrome P450 monooxygenase lcsN from Purpureocillium lilacinum (Paecilomyces lilacinus).